The sequence spans 788 residues: LPS-assembly protein LptD (788 aa).

A signal peptide spans 1-23 (MSLTSRSLLATMISLALYGPAMA).

Belongs to the LptD family. As to quaternary structure, component of the lipopolysaccharide transport and assembly complex. Interacts with LptE and LptA.

It localises to the cell outer membrane. In terms of biological role, together with LptE, is involved in the assembly of lipopolysaccharide (LPS) at the surface of the outer membrane. This is LPS-assembly protein LptD from Photobacterium profundum (strain SS9).